A 736-amino-acid polypeptide reads, in one-letter code: Factor of DNA methylation 4 (736 aa).

Composition is skewed to basic and acidic residues over residues 80-90 (RKYLRPRERPR) and 144-167 (DSGRSGEERLKFSDKPDPFFSNED). The tract at residues 80-167 (RKYLRPRERP…KPDPFFSNED (88 aa)) is disordered. Residues 360-597 (TLVSNLENTL…RSMRELTTRA (238 aa)) adopt a coiled-coil conformation.

In terms of biological role, acts in association with FDM3 and FDM5 for RNA-directed DNA methylation (RdDM). The sequence is that of Factor of DNA methylation 4 from Arabidopsis thaliana (Mouse-ear cress).